We begin with the raw amino-acid sequence, 531 residues long: Importin subunit alpha-2 (531 aa).

Residues 1-10 show a composition bias toward polar residues; that stretch reads MTLTETSLSH. The segment at 1-88 is disordered; it reads MTLTETSLSH…ISHQQSSTRL (88 aa). An IBB domain is found at 5-67; sequence ETSLSHNAEE…RNIVDVDEGG (63 aa). 2 stretches are compositionally biased toward basic and acidic residues: residues 11–20 and 29–50; these read NAEEGKDEGG and TKHE…KQKG. Acidic residues predominate over residues 62-75; the sequence is DVDEGGNSESELEE. ARM repeat units lie at residues 122–161, 164–203, 250–290, 293–331, 334–374, 377–416, and 420–459; these read NPPI…NIVS, TEQT…NIAG, KNPH…YLTD, DEQI…NVAT, DSLT…NIIA, QKQI…NLAQ, and NRQV…TLML. Residues 511–531 are disordered; it reads DDAGEKESHENADPQDNKWSF. The span at 515–531 shows a compositional bias: basic and acidic residues; the sequence is EKESHENADPQDNKWSF.

The protein belongs to the importin alpha family. In terms of assembly, forms a complex with an importin beta subunit. Interacts with akir-1. As to expression, germline tissues. Expressed exclusively in germ line cells from the early embryonic through adult stages.

The protein resides in the cytoplasm. It is found in the nucleus. The protein localises to the nucleus envelope. Nuclear transport receptor that mediates nuclear import of proteins, and which is involved in sister chromatid cohesion. Binds specifically and directly to substrates containing either a simple or bipartite nuclear localization signals (NLS) motif. Promotes docking of import substrates to the nuclear envelope. Together with akir-1 adapter, required for the import and load of cohesin complex proteins in meiotic nuclei. The polypeptide is Importin subunit alpha-2 (Caenorhabditis elegans).